The sequence spans 102 residues: Large ribosomal subunit protein uL24 (102 aa).

The protein belongs to the universal ribosomal protein uL24 family. Part of the 50S ribosomal subunit.

In terms of biological role, one of two assembly initiator proteins, it binds directly to the 5'-end of the 23S rRNA, where it nucleates assembly of the 50S subunit. One of the proteins that surrounds the polypeptide exit tunnel on the outside of the subunit. The chain is Large ribosomal subunit protein uL24 from Leuconostoc mesenteroides subsp. mesenteroides (strain ATCC 8293 / DSM 20343 / BCRC 11652 / CCM 1803 / JCM 6124 / NCDO 523 / NBRC 100496 / NCIMB 8023 / NCTC 12954 / NRRL B-1118 / 37Y).